Consider the following 196-residue polypeptide: Cilia- and flagella-associated protein 107 (196 aa).

Mn regions lie at residues 46 to 61 and 96 to 108; these read TPQTIYRKEYVPFPGH and ISTYDDHYNRHNY. The disordered stretch occupies residues 168-196; that stretch reads YPRPPAGAMSRREHAIPVPPPRLQPVPHF. The segment covering 184–196 has biased composition (pro residues); it reads PVPPPRLQPVPHF.

In terms of assembly, microtubule inner protein component of sperm flagellar doublet microtubules. In terms of tissue distribution, expressed in trachea multiciliated cells.

It localises to the cytoplasm. The protein resides in the cytoskeleton. The protein localises to the cilium axoneme. Its subcellular location is the flagellum axoneme. Its function is as follows. Microtubule inner protein (MIP) part of the dynein-decorated doublet microtubules (DMTs) in cilia axoneme, which is required for motile cilia beating. This Bos taurus (Bovine) protein is Cilia- and flagella-associated protein 107.